A 51-amino-acid chain; its full sequence is Zinc metalloproteinase-disintegrin-like crovidisin (51 aa).

Positions 1–12 (AMVTKNNGDLDK) constitute a Peptidase M12B domain. In terms of domain architecture, Disintegrin spans 13-18 (SGTECR). The N-linked (GlcNAc...) asparagine glycan is linked to asparagine 29.

It belongs to the venom metalloproteinase (M12B) family. P-III subfamily. P-IIIa sub-subfamily. In terms of assembly, monomer. Zn(2+) is required as a cofactor. In terms of tissue distribution, expressed by the venom gland.

The protein resides in the secreted. Its function is as follows. Snake venom zinc metalloproteinase-disintegrin-like that blocks the interaction between platelets and collagen fibers through its binding to collagen fibers, resulting in the blockade of collagen-mediated platelet functions such as adhesion, release reaction, thromboxane formation, and aggregation. Binds selectively to collagen type I with high affinity. Also exerts proteolytic activity to matrix. This chain is Zinc metalloproteinase-disintegrin-like crovidisin, found in Crotalus viridis viridis (Prairie rattlesnake).